The following is an 854-amino-acid chain: Protein asteroid (854 aa).

A disordered region spans residues 368 to 427 (SEEECSDDEHSSSSDEKFSDVEEGEDQEEADNQDEEQQEENQDVDSGDEEEEEADEGLEL). Residues 375 to 387 (DEHSSSSDEKFSD) show a composition bias toward basic and acidic residues. Residues 388–427 (VEEGEDQEEADNQDEEQQEENQDVDSGDEEEEEADEGLEL) are compositionally biased toward acidic residues.

It belongs to the asteroid family. In terms of tissue distribution, expressed in the proliferative tissues of embryos and in the mitotically active tissue anterior to the morphogenetic furrow in eye imaginal disks.

Functionally, may function in EGF receptor signaling. May play a role in compound eye morphogenesis. This Drosophila melanogaster (Fruit fly) protein is Protein asteroid (ast).